Here is a 239-residue protein sequence, read N- to C-terminus: Prolactin-8A4 (239 aa).

The signal sequence occupies residues 1-31 (MMKLALSQPPFSGTLLMLVVSILLLWEKAAS). Cystine bridges form between Cys-35–Cys-42 and Cys-102–Cys-215. Residues Asn-211 and Asn-218 are each glycosylated (N-linked (GlcNAc...) asparagine). A disulfide bond links Cys-232 and Cys-239.

It belongs to the somatotropin/prolactin family. In terms of tissue distribution, placental basal zone cells.

It is found in the secreted. In Rattus norvegicus (Rat), this protein is Prolactin-8A4 (Prl8a4).